The chain runs to 173 residues: Shikimate kinase (173 aa).

12–17 serves as a coordination point for ATP; that stretch reads GSGKTT. Residue Thr-16 participates in Mg(2+) binding. Substrate-binding residues include Asp-34, Arg-58, and Gly-80. ATP is bound at residue Arg-118. Arg-136 serves as a coordination point for substrate.

It belongs to the shikimate kinase family. Monomer. Mg(2+) is required as a cofactor.

Its subcellular location is the cytoplasm. The enzyme catalyses shikimate + ATP = 3-phosphoshikimate + ADP + H(+). It participates in metabolic intermediate biosynthesis; chorismate biosynthesis; chorismate from D-erythrose 4-phosphate and phosphoenolpyruvate: step 5/7. In terms of biological role, catalyzes the specific phosphorylation of the 3-hydroxyl group of shikimic acid using ATP as a cosubstrate. The sequence is that of Shikimate kinase from Moorella thermoacetica (strain ATCC 39073 / JCM 9320).